Consider the following 650-residue polypeptide: DNA mismatch repair protein MutL (650 aa).

Residues 374-420 (SSLPDTQRSQRQPEKAASGQRSSVDAGLSQGSSAHRASQTGLGQSGN) form a disordered region. Polar residues predominate over residues 392–420 (GQRSSVDAGLSQGSSAHRASQTGLGQSGN).

It belongs to the DNA mismatch repair MutL/HexB family.

In terms of biological role, this protein is involved in the repair of mismatches in DNA. It is required for dam-dependent methyl-directed DNA mismatch repair. May act as a 'molecular matchmaker', a protein that promotes the formation of a stable complex between two or more DNA-binding proteins in an ATP-dependent manner without itself being part of a final effector complex. In Shewanella amazonensis (strain ATCC BAA-1098 / SB2B), this protein is DNA mismatch repair protein MutL.